A 182-amino-acid chain; its full sequence is Putative manganese efflux pump MntP (182 aa).

Helical transmembrane passes span 6–26 (LIPL…VSLG), 37–57 (ILYI…IGMV), 71–91 (HFAG…STIL), 101–121 (IGIS…SVGL), 131–151 (IITI…GLLI), and 162–182 (YGEI…LFPI).

It belongs to the MntP (TC 9.B.29) family.

The protein resides in the cell membrane. In terms of biological role, probably functions as a manganese efflux pump. The protein is Putative manganese efflux pump MntP of Bacillus cereus (strain B4264).